Reading from the N-terminus, the 311-residue chain is tRNA pseudouridine synthase B (311 aa).

Residue Asp52 is the Nucleophile of the active site.

It belongs to the pseudouridine synthase TruB family. Type 1 subfamily.

The catalysed reaction is uridine(55) in tRNA = pseudouridine(55) in tRNA. Responsible for synthesis of pseudouridine from uracil-55 in the psi GC loop of transfer RNAs. This Burkholderia mallei (strain ATCC 23344) protein is tRNA pseudouridine synthase B.